The chain runs to 390 residues: Argininosuccinate synthase (390 aa).

6-14 (AYSGGLDTT) is an ATP binding site. Tyr84 lines the L-citrulline pocket. Gly114 contacts ATP. 3 residues coordinate L-aspartate: Thr116, Asn120, and Asp121. Asn120 serves as a coordination point for L-citrulline. Residues Arg124, Ser171, Ser180, Glu253, and Tyr265 each coordinate L-citrulline.

This sequence belongs to the argininosuccinate synthase family. Type 1 subfamily. As to quaternary structure, homotetramer.

The protein resides in the cytoplasm. It carries out the reaction L-citrulline + L-aspartate + ATP = 2-(N(omega)-L-arginino)succinate + AMP + diphosphate + H(+). It participates in amino-acid biosynthesis; L-arginine biosynthesis; L-arginine from L-ornithine and carbamoyl phosphate: step 2/3. This chain is Argininosuccinate synthase, found in Sulfurisphaera tokodaii (strain DSM 16993 / JCM 10545 / NBRC 100140 / 7) (Sulfolobus tokodaii).